Reading from the N-terminus, the 110-residue chain is Hydrogenase maturation factor HypA (110 aa).

Residue H2 participates in Ni(2+) binding. Positions 70, 73, 86, and 89 each coordinate Zn(2+).

This sequence belongs to the HypA/HybF family.

Its function is as follows. Involved in the maturation of [NiFe] hydrogenases. Required for nickel insertion into the metal center of the hydrogenase. This chain is Hydrogenase maturation factor HypA, found in Geobacter sp. (strain M21).